A 211-amino-acid polypeptide reads, in one-letter code: Large ribosomal subunit protein uL3 (211 aa).

Positions 125-148 are disordered; sequence GPASHGSKKWHRRPGSIGQRKTPG.

Belongs to the universal ribosomal protein uL3 family. In terms of assembly, part of the 50S ribosomal subunit. Forms a cluster with proteins L14 and L19. Also contacts proteins L13 and L17.

One of the primary rRNA binding proteins, it binds directly near the 3'-end of the 23S rRNA, where it nucleates assembly of the 50S subunit. This chain is Large ribosomal subunit protein uL3 (rplC), found in Deinococcus radiodurans (strain ATCC 13939 / DSM 20539 / JCM 16871 / CCUG 27074 / LMG 4051 / NBRC 15346 / NCIMB 9279 / VKM B-1422 / R1).